We begin with the raw amino-acid sequence, 1493 residues long: Myosin-13 (1493 aa).

Residues 18–67 form the Myosin N-terminal SH3-like domain; the sequence is KVGSIVWVQDPEEAWIDGEVVEVNGEDIKVQCTSGKTVVAKGSNTYPKDM. Residues 72 to 741 enclose the Myosin motor domain; sequence SGVDDMTTLA…QMAELDDRRT (670 aa). ATP contacts are provided by residues 166–173 and 219–227; these read GESGAGKT and NNNSSRFGK. Actin-binding regions lie at residues 504–538, 540–563, 598–622, and 622–644; these read LIEK…YETL, DNKY…AGDV, FPPL…KQQL, and LASL…KPNN. IQ domains follow at residues 744 to 773, 767 to 796, 792 to 821, 813 to 842, 836 to 865, and 859 to 888; these read LGRA…AAIN, LRNA…EAAA, REAA…VTVQ, YIEA…ATTV, KTKA…AAIT, and LKKA…DARD. Residues 889–1057 adopt a coiled-coil conformation; sequence TVVLQAAKSM…NFLKESVLTT (169 aa). The tract at residues 1085-1114 is disordered; that stretch reads QLSGAEFTTPPRIQESGSDTKSRGSHIDPQ. Positions 1102-1114 are enriched in basic and acidic residues; sequence SDTKSRGSHIDPQ. Residues 1161 to 1444 enclose the Dilute domain; that stretch reads DRLVQMIGSA…IASMTGVMTD (284 aa).

The protein belongs to the TRAFAC class myosin-kinesin ATPase superfamily. Myosin family. Plant myosin class XI subfamily. As to quaternary structure, homodimer.

Functionally, myosin heavy chain that is required for the cell cycle-regulated transport of various organelles and proteins for their segregation. Functions by binding with its tail domain to receptor proteins on organelles and exerting force with its N-terminal motor domain against actin filaments, thereby transporting its cargo along polarized actin cables. The chain is Myosin-13 (XI-G) from Arabidopsis thaliana (Mouse-ear cress).